Consider the following 721-residue polypeptide: Angiomotin-like 2a (721 aa).

Residues Gln35–His84 are disordered. Low complexity predominate over residues Ser49–Ser68. Tyr103 is modified (phosphotyrosine; by FGFR1). The segment at Asp169 to Ser214 is disordered. Residues Pro172–Gln198 are compositionally biased toward polar residues. The stretch at Ala275 to Glu531 forms a coiled coil. The segment covering Ile554 to Asn567 has biased composition (polar residues). 2 disordered regions span residues Ile554–His575 and Asp666–Ser709. The span at Ser688 to Ser702 shows a compositional bias: low complexity. Residues Glu718–Ile721 carry the PDZ-binding motif.

This sequence belongs to the angiomotin family. Interacts with SRC. Post-translationally, phosphorylation at Tyr-103 is necessary for efficient binding to SRC and synergistically functioning with SRC to activate the downstream MAPK pathway. Expressed in endothelial cells.

It is found in the recycling endosome. The protein resides in the cytoplasm. Its subcellular location is the cell projection. It localises to the podosome. The protein localises to the cell junction. In terms of biological role, required for proper architecture of actin filaments and for cell movements during embryogenesis. Plays a role in the radial actin fiber architecture in skin epithelial cells, thereby maintains cell geometry, size and cell interconnectivity within the skin. Plays an important role in coupling actin fibers to cell junctions in endothelial cells and is therefore required for correct endothelial cell morphology and maintenance of dorsal aorta lumen expansion during embryogenesis. May further play a role in the polarity, proliferation and migration of endothelial cells, and therefore participates in angiogenesis. Inhibits the Wnt/beta-catenin signaling pathway, probably by recruiting CTNNB1 to recycling endosomes and hence preventing its translocation to the nucleus. Regulates the translocation of phosphorylated SRC to peripheral cell-matrix adhesion sites. Selectively promotes FGF-induced MAPK activation through SRC. This Danio rerio (Zebrafish) protein is Angiomotin-like 2a (amotl2a).